Reading from the N-terminus, the 209-residue chain is Abscisic acid receptor PYL3 (209 aa).

Residues 1–23 (MNLAPIHDPSSSSTTTTSSSTPY) form a disordered region. Positions 10–21 (SSSSTTTTSSST) are enriched in low complexity. An START-like region spans residues 43-205 (FPRSPNTCTS…NLQNLAVIST (163 aa)). Abscisate-binding positions include Lys-79, 113–118 (ASTSVE), 140–146 (RLNNYRS), and Glu-170. Residues 109-113 (SGLPA) carry the Gate loop motif. The Latch loop signature appears at 139–141 (HRL).

This sequence belongs to the PYR/PYL/RCAR abscisic acid intracellular receptor family. As to quaternary structure, homodimer and monomer. Binds ABA on one subunit only. ABA-binding favors monomer and trans-homodimer intermediate, and increases PP2C inhibitor activity. Binds both (-)-ABA and (+)-ABA. Binds to CARs protein in an ABA-independent manner, both at the plasma membrane and in the nucleus. Interacts with HAB1, ABI1 and ABI2, and possibly with other PP2Cs.

Its subcellular location is the cytoplasm. It localises to the nucleus. The protein resides in the cell membrane. In terms of biological role, receptor for abscisic acid (ABA) required for ABA-mediated responses such as stomatal closure and germination inhibition. Inhibits the activity of group-A protein phosphatases type 2C (PP2Cs) when activated by ABA. Can be activated by both (-)-ABA and (+)-ABA. The polypeptide is Abscisic acid receptor PYL3 (PYL3) (Arabidopsis thaliana (Mouse-ear cress)).